A 931-amino-acid chain; its full sequence is Protein translocase subunit SecA (931 aa).

Residues Gln87, 105–109, and Asp515 contribute to the ATP site; that span reads GEGKT. Zn(2+)-binding residues include Cys915, Cys917, Cys926, and His927.

Belongs to the SecA family. As to quaternary structure, monomer and homodimer. Part of the essential Sec protein translocation apparatus which comprises SecA, SecYEG and auxiliary proteins SecDF-YajC and YidC. Requires Zn(2+) as cofactor.

Its subcellular location is the cell inner membrane. The protein resides in the cytoplasm. It catalyses the reaction ATP + H2O + cellular proteinSide 1 = ADP + phosphate + cellular proteinSide 2.. Its function is as follows. Part of the Sec protein translocase complex. Interacts with the SecYEG preprotein conducting channel. Has a central role in coupling the hydrolysis of ATP to the transfer of proteins into and across the cell membrane, serving both as a receptor for the preprotein-SecB complex and as an ATP-driven molecular motor driving the stepwise translocation of polypeptide chains across the membrane. This chain is Protein translocase subunit SecA, found in Burkholderia ambifaria (strain MC40-6).